Here is a 414-residue protein sequence, read N- to C-terminus: Enolase (414 aa).

Q162 lines the (2R)-2-phosphoglycerate pocket. The active-site Proton donor is the E204. The Mg(2+) site is built by D239, E280, and D307. (2R)-2-phosphoglycerate is bound by residues K332, R361, S362, and K383. Residue K332 is the Proton acceptor of the active site.

Belongs to the enolase family. The cofactor is Mg(2+).

It is found in the cytoplasm. The protein resides in the secreted. Its subcellular location is the cell surface. The catalysed reaction is (2R)-2-phosphoglycerate = phosphoenolpyruvate + H2O. It participates in carbohydrate degradation; glycolysis; pyruvate from D-glyceraldehyde 3-phosphate: step 4/5. Functionally, catalyzes the reversible conversion of 2-phosphoglycerate (2-PG) into phosphoenolpyruvate (PEP). It is essential for the degradation of carbohydrates via glycolysis. The protein is Enolase of Campylobacter jejuni subsp. jejuni serotype O:2 (strain ATCC 700819 / NCTC 11168).